Consider the following 405-residue polypeptide: Arrestin red cell isoform 2 (405 aa).

The protein belongs to the arrestin family.

Its subcellular location is the cytoplasm. This chain is Arrestin red cell isoform 2, found in Oncorhynchus mykiss (Rainbow trout).